Consider the following 114-residue polypeptide: Fatty acid-binding protein, liver (114 aa).

This sequence belongs to the calycin superfamily. Fatty-acid binding protein (FABP) family. Post-translationally, the N-terminus is blocked.

Its subcellular location is the cytoplasm. Functionally, FABPs are thought to play a role in the intracellular transport of long-chain fatty acids and their acyl-CoA esters. The polypeptide is Fatty acid-binding protein, liver (Lethenteron camtschaticum (Japanese lamprey)).